Consider the following 422-residue polypeptide: Dihydrofolate synthase/folylpolyglutamate synthase (422 aa).

Position 29-31 (29-31) interacts with 7,8-dihydropteroate; that stretch reads DLG. 59 to 62 serves as a coordination point for ATP; the sequence is GKGT. Residue Ser-83 coordinates Mg(2+). 122–125 serves as a coordination point for 7,8-dihydropteroate; the sequence is TYFE. Glu-146 provides a ligand contact to Mg(2+). 153–155 provides a ligand contact to 7,8-dihydropteroate; that stretch reads LDA. His-173 contacts Mg(2+). The residue at position 188 (Lys-188) is an N6-carboxylysine. Positions 257, 289, and 302 each coordinate ATP.

Belongs to the folylpolyglutamate synthase family. As to quaternary structure, monomer. Mg(2+) is required as a cofactor.

It catalyses the reaction 7,8-dihydropteroate + L-glutamate + ATP = 7,8-dihydrofolate + ADP + phosphate + H(+). The catalysed reaction is (6S)-5,6,7,8-tetrahydrofolyl-(gamma-L-Glu)(n) + L-glutamate + ATP = (6S)-5,6,7,8-tetrahydrofolyl-(gamma-L-Glu)(n+1) + ADP + phosphate + H(+). The enzyme catalyses 10-formyltetrahydrofolyl-(gamma-L-Glu)(n) + L-glutamate + ATP = 10-formyltetrahydrofolyl-(gamma-L-Glu)(n+1) + ADP + phosphate + H(+). It carries out the reaction (6R)-5,10-methylenetetrahydrofolyl-(gamma-L-Glu)(n) + L-glutamate + ATP = (6R)-5,10-methylenetetrahydrofolyl-(gamma-L-Glu)(n+1) + ADP + phosphate + H(+). It participates in cofactor biosynthesis; tetrahydrofolate biosynthesis; 7,8-dihydrofolate from 2-amino-4-hydroxy-6-hydroxymethyl-7,8-dihydropteridine diphosphate and 4-aminobenzoate: step 2/2. It functions in the pathway cofactor biosynthesis; tetrahydrofolylpolyglutamate biosynthesis. Functionally, functions in two distinct reactions of the de novo folate biosynthetic pathway. Catalyzes the addition of a glutamate residue to dihydropteroate (7,8-dihydropteroate or H2Pte) to form dihydrofolate (7,8-dihydrofolate monoglutamate or H2Pte-Glu). Also catalyzes successive additions of L-glutamate to tetrahydrofolate or 10-formyltetrahydrofolate or 5,10-methylenetetrahydrofolate, leading to folylpolyglutamate derivatives. The sequence is that of Dihydrofolate synthase/folylpolyglutamate synthase from Escherichia coli (strain K12).